The following is a 64-amino-acid chain: MAHPKRKTSKTRRDKRRTHYKATVAQIATCPITGEAHLYHRAYWHEGKMYYRGQVVIDKSEAVA.

The protein belongs to the bacterial ribosomal protein bL32 family.

In Flavobacterium johnsoniae (strain ATCC 17061 / DSM 2064 / JCM 8514 / BCRC 14874 / CCUG 350202 / NBRC 14942 / NCIMB 11054 / UW101) (Cytophaga johnsonae), this protein is Large ribosomal subunit protein bL32.